The following is a 3078-amino-acid chain: Probable polyketide synthase 44 (3078 aa).

A Ketosynthase family 3 (KS3) domain is found at 10–435 (DNDVAIIGIG…GSNACLILTE (426 aa)). Catalysis depends on for beta-ketoacyl synthase activity residues C175, H320, and H358. The segment at 627 to 660 (GILASISIGHSLGEVSSAVCSGMIDLETGCFIIY) is acyl/malonyl transferase. The active-site For acyl/malonyl transferase activity is S637. Residues 952–1072 (TNHLGYRNER…GRLSTTKHND (121 aa)) form an N-terminal hotdog fold region. Positions 952–1239 (TNHLGYRNER…YTQLTPYKNQ (288 aa)) constitute a PKS/mFAS DH domain. H984 acts as the Proton acceptor; for dehydratase activity in catalysis. Residues 1088 to 1239 (NFVTIQKKEL…YTQLTPYKNQ (152 aa)) form a C-terminal hotdog fold region. Catalysis depends on D1150, which acts as the Proton donor; for dehydratase activity. Residues 2080 to 2119 (LENIKTDLSNKNDNNNNNNNNNNDNKESNIKELLDNDDDE) adopt a coiled-coil conformation. The disordered stretch occupies residues 2087–2108 (LSNKNDNNNNNNNNNNDNKESN). Low complexity predominate over residues 2090–2102 (KNDNNNNNNNNNN). The Carrier domain occupies 2558–2636 (SDDLSIREQI…QLIQSVTDAM (79 aa)). S2596 bears the O-(pantetheine 4'-phosphoryl)serine mark. A helical transmembrane segment spans residues 2694–2714 (NTVFLTGSSGFIGIYILFYLI).

Pantetheine 4'-phosphate is required as a cofactor.

The protein resides in the membrane. In terms of biological role, probable polyketide synthase. The chain is Probable polyketide synthase 44 (pks44) from Dictyostelium discoideum (Social amoeba).